Reading from the N-terminus, the 388-residue chain is MVGTPLFSNAKKILLLGSGELGKEVIIEAQRLGVECIAVDSYENAPAMQVAHRYHVIDMKDSGSLRAVIEREKPDLIVPEIEAINTDTLKEMETEGYHVVPTANAAKLTMDREGIRRLASEKLGLRTAKYEFADSLDELKEAVKRIGIPCIIKPIMSSSGKGQSTVKSEFDIEKSWDYAKSATRGIGTKVIVEEFVNFDYEITLLTARTAFGTKFCEPIGHIQIDGDYHESWQPHPMCSPTKAKAQEVAKKITDELGGYGIFGVELFIMDDEVIFSEVSPRPHDTGMVTMVTQKMSEFEIHVRSILGLPVNVDLSYPGASYVIKSEIYKWAPEYDIIEASKLKDTKIRLFGKPVAKIGRRMGVALSTAEDVSVARDTAKKAANIVKIK.

N(1)-(5-phospho-beta-D-ribosyl)glycinamide contacts are provided by residues 20-21 and glutamate 80; that span reads EL. ATP contacts are provided by residues arginine 112, lysine 153, 158-163, 193-196, and glutamate 201; these read SSGKGQ and EEFV. The ATP-grasp domain occupies 117–306; sequence RLASEKLGLR…EFEIHVRSIL (190 aa). Glutamate 265 and glutamate 277 together coordinate Mg(2+). N(1)-(5-phospho-beta-D-ribosyl)glycinamide contacts are provided by residues aspartate 284, lysine 352, and 359 to 360; that span reads RR.

Belongs to the PurK/PurT family. As to quaternary structure, homodimer.

It catalyses the reaction N(1)-(5-phospho-beta-D-ribosyl)glycinamide + formate + ATP = N(2)-formyl-N(1)-(5-phospho-beta-D-ribosyl)glycinamide + ADP + phosphate + H(+). It participates in purine metabolism; IMP biosynthesis via de novo pathway; N(2)-formyl-N(1)-(5-phospho-D-ribosyl)glycinamide from N(1)-(5-phospho-D-ribosyl)glycinamide (formate route): step 1/1. In terms of biological role, involved in the de novo purine biosynthesis. Catalyzes the transfer of formate to 5-phospho-ribosyl-glycinamide (GAR), producing 5-phospho-ribosyl-N-formylglycinamide (FGAR). Formate is provided by PurU via hydrolysis of 10-formyl-tetrahydrofolate. The chain is Formate-dependent phosphoribosylglycinamide formyltransferase from Methanococcus vannielii (strain ATCC 35089 / DSM 1224 / JCM 13029 / OCM 148 / SB).